The primary structure comprises 152 residues: 6,7-dimethyl-8-ribityllumazine synthase (152 aa).

Residues Phe24, Ser56–Glu58, and Val80–Val82 contribute to the 5-amino-6-(D-ribitylamino)uracil site. Glu85–Thr86 serves as a coordination point for (2S)-2-hydroxy-3-oxobutyl phosphate. His88 functions as the Proton donor in the catalytic mechanism. Residue Phe113 participates in 5-amino-6-(D-ribitylamino)uracil binding. A (2S)-2-hydroxy-3-oxobutyl phosphate-binding site is contributed by Arg127.

Belongs to the DMRL synthase family.

The catalysed reaction is (2S)-2-hydroxy-3-oxobutyl phosphate + 5-amino-6-(D-ribitylamino)uracil = 6,7-dimethyl-8-(1-D-ribityl)lumazine + phosphate + 2 H2O + H(+). It participates in cofactor biosynthesis; riboflavin biosynthesis; riboflavin from 2-hydroxy-3-oxobutyl phosphate and 5-amino-6-(D-ribitylamino)uracil: step 1/2. Its function is as follows. Catalyzes the formation of 6,7-dimethyl-8-ribityllumazine by condensation of 5-amino-6-(D-ribitylamino)uracil with 3,4-dihydroxy-2-butanone 4-phosphate. This is the penultimate step in the biosynthesis of riboflavin. The chain is 6,7-dimethyl-8-ribityllumazine synthase from Thermococcus onnurineus (strain NA1).